The primary structure comprises 1758 residues: Condensin-2 complex subunit hcp-6 (1758 aa).

Disordered regions lie at residues 428–501 (DPGA…KAKE), 969–1008 (ENGSSDASTVNPDMPSVHHTRPPTQLSEVPSSQKSSKGGM), 1379–1460 (QKRL…ARLL), and 1500–1656 (SKQA…LSRG). A compositionally biased stretch (acidic residues) spans 438–462 (EQNEEEDEEEEGEDEEEEEENEQDD). Basic and acidic residues predominate over residues 463 to 473 (VAVKEEEQSDK). Residues 474–484 (SDEENDGDNEE) show a composition bias toward acidic residues. Basic and acidic residues predominate over residues 485–501 (NVSKKKEEKKKEKKAKE). Residues 969–979 (ENGSSDASTVN) are compositionally biased toward polar residues. Low complexity predominate over residues 999–1008 (SSQKSSKGGM). Positions 1326–1385 (CIEHKNDIDEILQDNRQLKDEMMFELQRVKQRTEEANRILDEYLKRVAEFKKQQKRLSKS) form a coiled coil. Acidic residues predominate over residues 1414–1423 (EDQENVEEEV). 2 stretches are compositionally biased toward basic and acidic residues: residues 1424–1437 (EMRTPQKKNPDADV) and 1500–1512 (SKQADKTEEKTIV). Composition is skewed to polar residues over residues 1602–1618 (ISANVTLRRSRRGQSTE) and 1640–1651 (VPTSSSGNTEND).

As to quaternary structure, component of the condensin-2 complex.

Its subcellular location is the nucleus. It is found in the chromosome. The protein localises to the centromere. Functionally, chromosomal protein which is recruited to mitotic chromosomes by hcp-3 (CENP-A) and hcp-4 (CENP-C). Involved in chromosome segregation during mitosis, playing a role in chromosome condensation and in maintaining chromosome morphology, rigidity and orientation during mitosis. This is Condensin-2 complex subunit hcp-6 from Caenorhabditis elegans.